The primary structure comprises 364 residues: NAC transcription factor 56 (364 aa).

The disordered stretch occupies residues 1–23; it reads MESTDSSGGPPPPQPNLPPGFRF. Residues 9–18 are compositionally biased toward pro residues; sequence GPPPPQPNLP. The 162-residue stretch at 17–178 folds into the NAC domain; that stretch reads LPPGFRFHPT…DWVLCRIYKK (162 aa). A DNA-binding region spans residues 116 to 184; it reads VGVKKALVFY…IYKKNNASRH (69 aa).

In terms of tissue distribution, stamen specific, in anthers from stage 8. Expressed in the outer integument, but seems not expressed in the embryo at the torpedo stage.

It is found in the nucleus. Its function is as follows. Transcription factor of the NAC family. Together with NAC018/NARS2, regulates embryogenesis by regulating the development and degeneration of ovule integuments, a process required for intertissue communication between the embryo and the maternal integument. The sequence is that of NAC transcription factor 56 from Arabidopsis thaliana (Mouse-ear cress).